A 386-amino-acid polypeptide reads, in one-letter code: Histone-lysine N-methyltransferase SETD7 (386 aa).

The span at 1-12 (MDSSDDEIACDE) shows a compositional bias: acidic residues. Residues 1–21 (MDSSDDEIACDEGDYKGAKDD) form a disordered region. 4 MORN repeats span residues 15–38 (YKGAKDDNDLPHGLGKVKFSSGDE), 39–61 (FIGAFEHGIKCGPGKFHFFDDST), 62–84 (LEGNYVDGELHGIGIYTNDDGSI), and 109–131 (FRGQYSEGVRCGLCFYYFPDGGS). Positions 222-344 (ELVYAAPSKI…EGDELTVHYT (123 aa)) constitute an SET domain. Residues 234–236 (AGE), Asn304, and His305 contribute to the S-adenosyl-L-methionine site.

Belongs to the class V-like SAM-binding methyltransferase superfamily. Histone-lysine methyltransferase family. SET7 subfamily.

The protein resides in the nucleus. It is found in the chromosome. It catalyses the reaction L-lysyl(4)-[histone H3] + S-adenosyl-L-methionine = N(6)-methyl-L-lysyl(4)-[histone H3] + S-adenosyl-L-homocysteine + H(+). The enzyme catalyses L-lysyl-[protein] + S-adenosyl-L-methionine = N(6)-methyl-L-lysyl-[protein] + S-adenosyl-L-homocysteine + H(+). Functionally, histone methyltransferase that specifically monomethylates 'Lys-4' of histone H3. H3 'Lys-4' methylation represents a specific tag for epigenetic transcriptional activation. Plays a central role in the transcriptional activation of genes. Also has methyltransferase activity toward non-histone proteins. The sequence is that of Histone-lysine N-methyltransferase SETD7 (setd7) from Halocynthia roretzi (Sea squirt).